The following is a 162-amino-acid chain: D-aminoacyl-tRNA deacylase (162 aa).

The Gly-cisPro motif, important for rejection of L-amino acids signature appears at 145–146; that stretch reads GP.

The protein belongs to the DTD family. In terms of assembly, homodimer.

It is found in the cytoplasm. It carries out the reaction glycyl-tRNA(Ala) + H2O = tRNA(Ala) + glycine + H(+). The catalysed reaction is a D-aminoacyl-tRNA + H2O = a tRNA + a D-alpha-amino acid + H(+). Functionally, an aminoacyl-tRNA editing enzyme that deacylates mischarged D-aminoacyl-tRNAs. Also deacylates mischarged glycyl-tRNA(Ala), protecting cells against glycine mischarging by AlaRS. Acts via tRNA-based rather than protein-based catalysis; rejects L-amino acids rather than detecting D-amino acids in the active site. By recycling D-aminoacyl-tRNA to D-amino acids and free tRNA molecules, this enzyme counteracts the toxicity associated with the formation of D-aminoacyl-tRNA entities in vivo and helps enforce protein L-homochirality. The chain is D-aminoacyl-tRNA deacylase from Bifidobacterium longum (strain DJO10A).